We begin with the raw amino-acid sequence, 262 residues long: Putative phosphatase HI_0003 (262 aa).

The active-site Nucleophile is the Asp-9. The Mg(2+) site is built by Asp-9 and Asn-11. Phosphate is bound by residues 43–44 and Lys-189; that span reads SA. Residue Asp-212 participates in Mg(2+) binding. Position 215 (Asn-215) interacts with phosphate.

The protein belongs to the HAD-like hydrolase superfamily. Cof family. The cofactor is Mg(2+).

The polypeptide is Putative phosphatase HI_0003 (Haemophilus influenzae (strain ATCC 51907 / DSM 11121 / KW20 / Rd)).